We begin with the raw amino-acid sequence, 178 residues long: Caveolin-1 (178 aa).

Serine 2 carries the N-acetylserine modification. Residue serine 2 is modified to Phosphoserine. The tract at residues 2 to 94 is required for homooligomerization; it reads SGGKYVDSEG…WKASFTTFTV (93 aa). Residues 2–104 are Cytoplasmic-facing; the sequence is SGGKYVDSEG…TKYWFYRLLS (103 aa). Position 5 is an N6-acetyllysine; alternate (lysine 5). Lysine 5 is covalently cross-linked (Glycyl lysine isopeptide (Lys-Gly) (interchain with G-Cter in ubiquitin); alternate). Tyrosine 6 bears the Phosphotyrosine mark. Serine 9 carries the post-translational modification Phosphoserine. The residue at position 14 (tyrosine 14) is a Phosphotyrosine; by ABL1. At tyrosine 25 the chain carries Phosphotyrosine. Residues lysine 26, lysine 30, lysine 39, lysine 47, and lysine 57 each participate in a glycyl lysine isopeptide (Lys-Gly) (interchain with G-Cter in ubiquitin) cross-link. The interaction with CAVIN3 stretch occupies residues 82 to 94; sequence DGIWKASFTTFTV. The helical intramembrane region spans 105–125; it reads ALFGIPMALIWGIYFAILSFL. The Cytoplasmic portion of the chain corresponds to 126-178; it reads HIWAVVPCIKSFLIEIQCISRVYSIYVHTFCDPFFEAVGKIFSNIRINMQKEI. The segment at 131-142 is interacts with SPRY1, SPRY2, SPRY3 and SPRY4; sequence VPCIKSFLIEIQ. Residues cysteine 133, cysteine 143, and cysteine 156 are each lipidated (S-palmitoyl cysteine). Residues 149–160 form an interacts with SPRY1, SPRY2, and SPRY4 region; that stretch reads SIYVHTFCDPFF. The segment at 167 to 178 is interacts with SPRY1, SPRY2, SPRY3 and SPRY4; it reads FSNIRINMQKEI.

The protein belongs to the caveolin family. In terms of assembly, homooligomer. Interacts with GLIPR2. Interacts with NOSTRIN. Interacts with SNAP25 and STX1A. Interacts (via the N-terminus) with DPP4; the interaction is direct. Interacts with CTNNB1, CDH1 and JUP. Interacts with PACSIN2; this interaction induces membrane tubulation. Interacts with SLC7A9. Interacts with BMX and BTK. Interacts with TGFBR1. Interacts with CAVIN3 (via leucine-zipper domain) in a cholesterol-sensitive manner. Interacts with CAVIN1. Interacts with EHD2 in a cholesterol-dependent manner. Forms a ternary complex with UBXN6 and VCP; mediates CAV1 targeting to lysosomes for degradation. Interacts with ABCG1; this interaction regulates ABCG1-mediated cholesterol efflux. Interacts with NEU3; this interaction enhances NEU3 sialidase activity within caveola. Interacts (via C-terminus) with SPRY1, SPRY2 (via C-terminus), SPRY3, and SPRY4. Interacts with IGFBP5; this interaction allows trafficking of IGFBP5 from the plasma membrane to the nucleus. Post-translationally, phosphorylated at Tyr-14 by ABL1 in response to oxidative stress. Ubiquitinated. Undergo monoubiquitination and multi- and/or polyubiquitination. Monoubiquitination of N-terminal lysines promotes integration in a ternary complex with UBXN6 and VCP which promotes oligomeric CAV1 targeting to lysosomes for degradation. Ubiquitinated by ZNRF1; leading to degradation and modulation of the TLR4-mediated immune response.

It localises to the golgi apparatus membrane. Its subcellular location is the cell membrane. The protein resides in the membrane. It is found in the caveola. The protein localises to the membrane raft. Its function is as follows. May act as a scaffolding protein within caveolar membranes. Forms a stable heterooligomeric complex with CAV2 that targets to lipid rafts and drives caveolae formation. Mediates the recruitment of CAVIN proteins (CAVIN1/2/3/4) to the caveolae. Interacts directly with G-protein alpha subunits and can functionally regulate their activity. Involved in the costimulatory signal essential for T-cell receptor (TCR)-mediated T-cell activation. Its binding to DPP4 induces T-cell proliferation and NF-kappa-B activation in a T-cell receptor/CD3-dependent manner. Recruits CTNNB1 to caveolar membranes and may regulate CTNNB1-mediated signaling through the Wnt pathway. Negatively regulates TGFB1-mediated activation of SMAD2/3 by mediating the internalization of TGFBR1 from membrane rafts leading to its subsequent degradation. Binds 20(S)-hydroxycholesterol (20(S)-OHC). The protein is Caveolin-1 (CAV1) of Felis catus (Cat).